We begin with the raw amino-acid sequence, 488 residues long: 1-hydroxycarotenoid 3,4-desaturase (488 aa).

FAD is bound by residues Glu31, Lys39, 55-56 (SL), Val247, Asn275, Leu431, Gly461, and 468-469 (GI).

Belongs to the carotenoid/retinoid oxidoreductase family. In terms of assembly, monomer.

The enzyme catalyses rhodopin + A = (3E)-3,4-didehydrorhodopin + AH2. It catalyses the reaction 1'-hydroxy-gamma-carotene + A = 1'-hydroxytorulene + AH2. The catalysed reaction is 1-hydroxy-all-trans-1,2-dihydro-neurosporene + A = demethylspheroidene + AH2. It carries out the reaction 1,1'-dihydroxy-1,1',2,2'-tetrahydroneurosporene + A = 1'-hydroxy-demethylspheroidene + AH2. The enzyme catalyses 1,1'-dihydroxy-1,1',2,2'-tetrahydrolycopene + A = 1,1'-dihydroxy-3,4-didehydro-1,2-dihydrolycopene + AH2. Its pathway is carotenoid biosynthesis. In terms of biological role, catalyzes the introduction of a C-3,4 double bond into 1'-hydroxy-gamma-carotene and rhodopin (1-hydroxylycopene) to yield 1'-hydroxytorulene and (3E)-3,4-didehydrorhodopin, respectively. Can also 1-hydroxy-all-trans-1,2-dihydro-neurosporene, 1,1'-dihydroxy-1,1',2,2'-tetrahydroneurosporene and 1,1'-dihydroxy-1,1',2,2'-tetrahydrolycopene. Probably involved in the synthesis of myxol, a gamma-carotene derivative. May use FAD as a proton acceptor. The sequence is that of 1-hydroxycarotenoid 3,4-desaturase from Flavobacterium sp. (strain P99-3).